A 601-amino-acid polypeptide reads, in one-letter code: Terpinolene synthase, chloroplastic (601 aa).

Residues 1–32 (MSTFVISNSMHVGISFSFLHKLPQTPPPQVVC) constitute a chloroplast transit peptide. Mg(2+)-binding residues include Asp-354, Asp-358, Asp-498, Thr-502, and Glu-506. The short motif at 354-358 (DDVYD) is the DDXXD motif element.

This sequence belongs to the terpene synthase family. Tpsd subfamily. Mg(2+) is required as a cofactor. It depends on Mn(2+) as a cofactor.

The protein resides in the plastid. Its subcellular location is the chloroplast. It catalyses the reaction (2E)-geranyl diphosphate = terpinolene + diphosphate. It participates in secondary metabolite biosynthesis; terpenoid biosynthesis. Its function is as follows. Monoterpene synthase that catalyzes the formation of terpinolene and other monoterpenes from geranyl diphosphate. The sequence is that of Terpinolene synthase, chloroplastic (TES) from Ocimum basilicum (Sweet basil).